The primary structure comprises 514 residues: 1,25-dihydroxyvitamin D(3) 24-hydroxylase, mitochondrial (514 aa).

A mitochondrion-targeting transit peptide spans 1–35 (MSCPIDKRRPLIAFLRRLRDLGQPPRSVTSKAHVK). Residue Cys-462 participates in heme binding.

Belongs to the cytochrome P450 family. The cofactor is heme.

It is found in the mitochondrion. The catalysed reaction is calcitriol + 2 reduced [adrenodoxin] + O2 + 2 H(+) = calcitetrol + 2 oxidized [adrenodoxin] + H2O. It carries out the reaction calcitetrol + 2 reduced [adrenodoxin] + O2 + 2 H(+) = (1S)-1,25-dihydroxy-24-oxocalciol + 2 oxidized [adrenodoxin] + 2 H2O. It catalyses the reaction (1S)-1,25-dihydroxy-24-oxocalciol + 2 reduced [adrenodoxin] + O2 + 2 H(+) = (1S)-1,23,25-trihydroxy-24-oxocalciol + 2 oxidized [adrenodoxin] + H2O. The enzyme catalyses (1S)-1,23-dihydroxy-24,25,26,27-tetranorcalciol + 2 reduced [adrenodoxin] + O2 + 2 H(+) = (1S)-1-hydroxy-23-oxo-24,25,26,27-tetranorcalciol + 2 oxidized [adrenodoxin] + 2 H2O. The catalysed reaction is (1S)-1-hydroxy-23-oxo-24,25,26,27-tetranorcalciol + 2 reduced [adrenodoxin] + O2 + H(+) = calcitroate + 2 oxidized [adrenodoxin] + H2O. It carries out the reaction calcidiol + 2 reduced [adrenodoxin] + O2 + 2 H(+) = secalciferol + 2 oxidized [adrenodoxin] + H2O. It catalyses the reaction secalciferol + 2 reduced [adrenodoxin] + O2 + 2 H(+) = 25-hydroxy-24-oxocalciol + 2 oxidized [adrenodoxin] + 2 H2O. The enzyme catalyses 25-hydroxy-24-oxocalciol + 2 reduced [adrenodoxin] + O2 + 2 H(+) = 23S,25-dihydroxy-24-oxocholecalciferol + 2 oxidized [adrenodoxin] + H2O. The catalysed reaction is 20S,23-dihydroxycholecalciferol + 2 reduced [adrenodoxin] + O2 + 2 H(+) = 20S,23,25-trihydroxycholecalciferol + 2 oxidized [adrenodoxin] + H2O. It carries out the reaction 20S,23-dihydroxycholecalciferol + 2 reduced [adrenodoxin] + O2 + 2 H(+) = 20S,23,24-trihydroxycholecalciferol + 2 oxidized [adrenodoxin] + H2O. It catalyses the reaction 20S-hydroxycholecalciferol + 2 reduced [adrenodoxin] + O2 + 2 H(+) = 20S,25-dihydroxycholecalciferol + 2 oxidized [adrenodoxin] + H2O. The enzyme catalyses 20S-hydroxycholecalciferol + 2 reduced [adrenodoxin] + O2 + 2 H(+) = 20S,24S-dihydroxycholecalciferol + 2 oxidized [adrenodoxin] + H2O. The catalysed reaction is 20S-hydroxycholecalciferol + 2 reduced [adrenodoxin] + O2 + 2 H(+) = 20S,24R-dihydroxycholecalciferol + 2 oxidized [adrenodoxin] + H2O. In terms of biological role, a cytochrome P450 monooxygenase with a key role in vitamin D catabolism and calcium homeostasis. Via C24-oxidation pathway, catalyzes the inactivation of both the vitamin D precursor calcidiol (25-hydroxyvitamin D(3)) and the active hormone calcitriol (1-alpha,25-dihydroxyvitamin D(3)). With initial hydroxylation at C-24 (via C24-oxidation pathway), performs a sequential 6-step oxidation of calcitriol leading to the formation of the biliary metabolite calcitroic acid. Hydroxylates at C-24 or C-25 other vitamin D active metabolites, such as CYP11A1-derived secosteroids 20S-hydroxycholecalciferol and 20S,23-dihydroxycholecalciferol. Mechanistically, uses molecular oxygen inserting one oxygen atom into a substrate, and reducing the second into a water molecule, with two electrons provided by NADPH via FDXR/adrenodoxin reductase and FDX1/adrenodoxin. This is 1,25-dihydroxyvitamin D(3) 24-hydroxylase, mitochondrial from Mus musculus (Mouse).